Consider the following 153-residue polypeptide: Transcription antitermination protein NusB (153 aa).

This sequence belongs to the NusB family.

Its function is as follows. Involved in transcription antitermination. Required for transcription of ribosomal RNA (rRNA) genes. Binds specifically to the boxA antiterminator sequence of the ribosomal RNA (rrn) operons. The protein is Transcription antitermination protein NusB of Symbiobacterium thermophilum (strain DSM 24528 / JCM 14929 / IAM 14863 / T).